A 459-amino-acid chain; its full sequence is Trigger factor (459 aa).

Residues 166–245 enclose the PPIase FKBP-type domain; sequence GDFANIDLTA…VNSVKAEELP (80 aa).

This sequence belongs to the FKBP-type PPIase family. Tig subfamily.

It is found in the cytoplasm. The catalysed reaction is [protein]-peptidylproline (omega=180) = [protein]-peptidylproline (omega=0). Its function is as follows. Involved in protein export. Acts as a chaperone by maintaining the newly synthesized protein in an open conformation. Functions as a peptidyl-prolyl cis-trans isomerase. This Bifidobacterium longum (strain NCC 2705) protein is Trigger factor.